Here is a 143-residue protein sequence, read N- to C-terminus: MAIERTFSIIKPDAVAKNHIGAIYNRFETAGLKIVAAKMLHLTKEQAEGFYAEHSERGFFGALVAFMTSGPIMVQVLEGENAVLAHREILGATNPAQAAPGTIRADFAESIDENAAHGSDALESAAREIAYFFSAEELCPRTR.

K11, F59, R87, T93, R104, and N114 together coordinate ATP. H117 serves as the catalytic Pros-phosphohistidine intermediate.

The protein belongs to the NDK family. In terms of assembly, homotetramer. Requires Mg(2+) as cofactor.

The protein resides in the cytoplasm. It carries out the reaction a 2'-deoxyribonucleoside 5'-diphosphate + ATP = a 2'-deoxyribonucleoside 5'-triphosphate + ADP. The enzyme catalyses a ribonucleoside 5'-diphosphate + ATP = a ribonucleoside 5'-triphosphate + ADP. In terms of biological role, major role in the synthesis of nucleoside triphosphates other than ATP. The ATP gamma phosphate is transferred to the NDP beta phosphate via a ping-pong mechanism, using a phosphorylated active-site intermediate. This chain is Nucleoside diphosphate kinase, found in Shewanella sp. (strain ANA-3).